A 322-amino-acid chain; its full sequence is uncharacterized protein (322 aa).

The signal sequence occupies residues 1–27; the sequence is MKRLFWNLKHKKAWLVLLLGTGMILSS. The N-palmitoyl cysteine moiety is linked to residue cysteine 28. A lipid anchor (S-diacylglycerol cysteine) is attached at cysteine 28. Residues 235–254 are compositionally biased toward polar residues; sequence DNSTNPNAPGSGQGDSTPPA. Positions 235–298 are disordered; sequence DNSTNPNAPG…AVQRSQKSYG (64 aa). A compositionally biased stretch (gly residues) spans 257–267; it reads GEGGGSDGSSG. Polar residues predominate over residues 274-296; it reads NGQNTTPTSPQSSQPAVQRSQKS.

The protein resides in the cell membrane. This is an uncharacterized protein from Mycoplasma genitalium (strain ATCC 33530 / DSM 19775 / NCTC 10195 / G37) (Mycoplasmoides genitalium).